The chain runs to 144 residues: Peptide methionine sulfoxide reductase MsrB (144 aa).

The MsrB domain occupies 6 to 128; it reads KDELKKKLTP…NSAALRFIPK (123 aa). Residue C117 is the Nucleophile of the active site.

Belongs to the MsrB Met sulfoxide reductase family.

It carries out the reaction L-methionyl-[protein] + [thioredoxin]-disulfide + H2O = L-methionyl-(R)-S-oxide-[protein] + [thioredoxin]-dithiol. In Shouchella clausii (strain KSM-K16) (Alkalihalobacillus clausii), this protein is Peptide methionine sulfoxide reductase MsrB.